A 1295-amino-acid polypeptide reads, in one-letter code: Phosphoribosylformylglycinamidine synthase (1295 aa).

A disordered region spans residues 305 to 327 (WPGAATGSGGEIRDEGATGRGAK). ATP-binding positions include 307–318 (GAATGSGGEIRD) and Ala678. 3 residues coordinate Mg(2+): Glu718, Asn722, and Asp884. ATP is bound at residue Ser886. The Glutamine amidotransferase type-1 domain occupies 1042 to 1295 (VAVLREQGVN…IFRNARKQLG (254 aa)). Cys1135 acts as the Nucleophile in catalysis. Catalysis depends on residues His1260 and Glu1262.

In the N-terminal section; belongs to the FGAMS family. Monomer.

The protein resides in the cytoplasm. It carries out the reaction N(2)-formyl-N(1)-(5-phospho-beta-D-ribosyl)glycinamide + L-glutamine + ATP + H2O = 2-formamido-N(1)-(5-O-phospho-beta-D-ribosyl)acetamidine + L-glutamate + ADP + phosphate + H(+). It participates in purine metabolism; IMP biosynthesis via de novo pathway; 5-amino-1-(5-phospho-D-ribosyl)imidazole from N(2)-formyl-N(1)-(5-phospho-D-ribosyl)glycinamide: step 1/2. Functionally, phosphoribosylformylglycinamidine synthase involved in the purines biosynthetic pathway. Catalyzes the ATP-dependent conversion of formylglycinamide ribonucleotide (FGAR) and glutamine to yield formylglycinamidine ribonucleotide (FGAM) and glutamate. This is Phosphoribosylformylglycinamidine synthase from Escherichia coli O6:K15:H31 (strain 536 / UPEC).